The primary structure comprises 393 residues: NAD(P)H-quinone oxidoreductase subunit H, chloroplastic (393 aa).

Belongs to the complex I 49 kDa subunit family. As to quaternary structure, NDH is composed of at least 16 different subunits, 5 of which are encoded in the nucleus.

Its subcellular location is the plastid. It is found in the chloroplast thylakoid membrane. It carries out the reaction a plastoquinone + NADH + (n+1) H(+)(in) = a plastoquinol + NAD(+) + n H(+)(out). The catalysed reaction is a plastoquinone + NADPH + (n+1) H(+)(in) = a plastoquinol + NADP(+) + n H(+)(out). Its function is as follows. NDH shuttles electrons from NAD(P)H:plastoquinone, via FMN and iron-sulfur (Fe-S) centers, to quinones in the photosynthetic chain and possibly in a chloroplast respiratory chain. The immediate electron acceptor for the enzyme in this species is believed to be plastoquinone. Couples the redox reaction to proton translocation, and thus conserves the redox energy in a proton gradient. The protein is NAD(P)H-quinone oxidoreductase subunit H, chloroplastic of Guizotia abyssinica (Niger).